Consider the following 155-residue polypeptide: Small ribosomal subunit protein uS7cz/uS7cy (155 aa).

It belongs to the universal ribosomal protein uS7 family. As to quaternary structure, part of the 30S ribosomal subunit.

The protein localises to the plastid. It is found in the chloroplast. One of the primary rRNA binding proteins, it binds directly to 16S rRNA where it nucleates assembly of the head domain of the 30S subunit. In Coffea arabica (Arabian coffee), this protein is Small ribosomal subunit protein uS7cz/uS7cy (rps7-A).